A 578-amino-acid chain; its full sequence is Nuclear receptor subfamily 1 group D member 2 (578 aa).

A required for phosphorylation by CSNK1E and cytoplasmic localization region spans residues 1 to 60; sequence MELNAGGVIAYISSSSSASSPASCHSEGSENSFQSSSSSVPSSPNSSNCDANGNPKNTDV. The tract at residues 1-99 is modulating; sequence MELNAGGVIA…HSGMTKFSGM (99 aa). Residues 13–47 are compositionally biased toward low complexity; sequence SSSSSASSPASCHSEGSENSFQSSSSSVPSSPNSS. The tract at residues 13 to 89 is disordered; that stretch reads SSSSSASSPA…KPGAPGMTKS (77 aa). Phosphoserine; by GSK3-beta is present on S46. The segment covering 48–61 has biased composition (polar residues); sequence NCDANGNPKNTDVS. A DNA-binding region (nuclear receptor) is located at residues 100-176; the sequence is VLLCKVCGDV…VGMSRDAVRF (77 aa). 2 consecutive NR C4-type zinc fingers follow at residues 103 to 123 and 140 to 164; these read CKVC…CEGC and CLKN…FKKC. N6-acetyllysine; by KAT5 is present on residues K162 and K163. The interval 214–247 is disordered; the sequence is EPHEQSVPPAQEQLRPKPQLEQENIKSTPPPSDF. The segment covering 227–237 has biased composition (basic and acidic residues); sequence LRPKPQLEQEN. 2 cysteine pairs are disulfide-bonded: C336-C342 and C373-C383. Residues 368 to 578 enclose the NR LBD domain; sequence RNSYLCSTGG…EELLAFKVHP (211 aa). Heme is bound by residues C383 and H567. An interaction with ZNHIT1 region spans residues 396-578; that stretch reads SGHEIWEEFS…EELLAFKVHP (183 aa).

This sequence belongs to the nuclear hormone receptor family. NR1 subfamily. As to quaternary structure, binds DNA as a monomer or a homodimer. Interacts with NCOA5 coactivator, leading to a strong increase of transcription of target genes. Interacts (via N-terminus) with KAT5. Interacts (via C-terminus) with HDAC1. Interacts with ZNHIT1. Interacts with SIAH2. Post-translationally, deacetylated by HDAC1. Acetylation and deacetylation regulate its transcriptional regulatory activity. In terms of processing, under more reducing intracellular redox conditions, Cys-383 is in its heme-bound state, which is optimal for recruitment of the NCOR1/HDAC3 corepressor complex and repression of target genes. When subjected to oxidative stress conditions, Cys-383 undergoes oxidation to form a disulfide bridge with Cys-373, also triggering a ligand switch that results in release of bound heme and derepression of target genes. Ubiquitinated by SIAH2; leading to its proteasomal degradation. Post-translationally, phosphorylated by CSNK1E; phosphorylation enhances its cytoplasmic localization.

Its subcellular location is the nucleus. It is found in the cytoplasm. Its activity is regulated as follows. The heme-bound form can bind gaseous signaling molecules such as CO and nitric oxide (NO) and NO can reverse its transcriptional repressor activity. Its function is as follows. Transcriptional repressor which coordinates circadian rhythm and metabolic pathways in a heme-dependent manner. Integral component of the complex transcription machinery that governs circadian rhythmicity and forms a critical negative limb of the circadian clock by directly repressing the expression of core clock components BMAL1 and CLOCK. Also regulates genes involved in metabolic functions, including lipid metabolism and the inflammatory response. Acts as a receptor for heme which stimulates its interaction with the NCOR1/HDAC3 corepressor complex, enhancing transcriptional repression. Recognizes two classes of DNA response elements within the promoter of its target genes and can bind to DNA as either monomers or homodimers, depending on the nature of the response element. Binds as a monomer to a response element composed of the consensus half-site motif 5'-[A/G]GGTCA-3' preceded by an A/T-rich 5' sequence (RevRE), or as a homodimer to a direct repeat of the core motif spaced by two nuclegotides (RevDR-2). Acts as a potent competitive repressor of ROR alpha (RORA) function and also negatively regulates the expression of NR1D1. Regulates lipid and energy homeostasis in the skeletal muscle via repression of genes involved in lipid metabolism and myogenesis including: CD36, FABP3, FABP4, UCP3, SCD1 and MSTN. Regulates hepatic lipid metabolism via the repression of APOC3. Represses gene expression at a distance in macrophages by inhibiting the transcription of enhancer-derived RNAs (eRNAs). In addition to its activity as a repressor, can also act as a transcriptional activator. Acts as a transcriptional activator of the sterol regulatory element-binding protein 1 (SREBF1) and the inflammatory mediator interleukin-6 (IL6) in the skeletal muscle. Plays a role in the regulation of circadian sleep/wake cycle; essential for maintaining wakefulness during the dark phase or active period. Key regulator of skeletal muscle mitochondrial function; negatively regulates the skeletal muscle expression of core clock genes and genes involved in mitochondrial biogenesis, fatty acid beta-oxidation and lipid metabolism. May play a role in the circadian control of neutrophilic inflammation in the lung. This is Nuclear receptor subfamily 1 group D member 2 from Rattus norvegicus (Rat).